We begin with the raw amino-acid sequence, 59 residues long: Potassium channel toxin alpha-KTx 3.10 (59 aa).

The signal sequence occupies residues 1-22; the sequence is MKVFFAVLIALFVCSMVIGIHG. Disulfide bonds link C30/C50, C36/C55, and C40/C57.

The protein belongs to the short scorpion toxin superfamily. Potassium channel inhibitor family. Alpha-KTx 03 subfamily. In terms of tissue distribution, expressed by the venom gland.

Its subcellular location is the secreted. Its function is as follows. Inhibits insect potassium channel. Is at least a 100-fold more potent against the Drosophila Shaker channel than towards its mammalian homologs Kv1.1/KCNA1 and Kv1.3/KCNA3. The polypeptide is Potassium channel toxin alpha-KTx 3.10 (Buthus israelis (Israeli scorpion)).